The following is a 275-amino-acid chain: 3-methyl-2-oxobutanoate hydroxymethyltransferase (275 aa).

Asp55 and Asp94 together coordinate Mg(2+). 3-methyl-2-oxobutanoate is bound by residues 55-56 (DS), Asp94, and Lys123. Mg(2+) is bound at residue Glu125. Glu192 acts as the Proton acceptor in catalysis.

It belongs to the PanB family. In terms of assembly, homodecamer; pentamer of dimers. The cofactor is Mg(2+).

The protein resides in the cytoplasm. It catalyses the reaction 3-methyl-2-oxobutanoate + (6R)-5,10-methylene-5,6,7,8-tetrahydrofolate + H2O = 2-dehydropantoate + (6S)-5,6,7,8-tetrahydrofolate. The protein operates within cofactor biosynthesis; (R)-pantothenate biosynthesis; (R)-pantoate from 3-methyl-2-oxobutanoate: step 1/2. Its function is as follows. Catalyzes the reversible reaction in which hydroxymethyl group from 5,10-methylenetetrahydrofolate is transferred onto alpha-ketoisovalerate to form ketopantoate. In Halorhodospira halophila (strain DSM 244 / SL1) (Ectothiorhodospira halophila (strain DSM 244 / SL1)), this protein is 3-methyl-2-oxobutanoate hydroxymethyltransferase.